The sequence spans 174 residues: Chorismate pyruvate-lyase (174 aa).

The substrate site is built by methionine 36, arginine 78, leucine 116, and glutamate 157.

It belongs to the UbiC family. As to quaternary structure, monomer.

It localises to the cytoplasm. It carries out the reaction chorismate = 4-hydroxybenzoate + pyruvate. The protein operates within cofactor biosynthesis; ubiquinone biosynthesis. Removes the pyruvyl group from chorismate, with concomitant aromatization of the ring, to provide 4-hydroxybenzoate (4HB) for the ubiquinone pathway. This Erwinia tasmaniensis (strain DSM 17950 / CFBP 7177 / CIP 109463 / NCPPB 4357 / Et1/99) protein is Chorismate pyruvate-lyase.